We begin with the raw amino-acid sequence, 232 residues long: GFP-like non-fluorescent chromoprotein FP595 (232 aa).

A cross-link (2-iminomethyl-5-imidazolinone (Met-Gly)) is located at residues 63-65; that stretch reads MYG. (E)-2,3-didehydrotyrosine is present on Y64.

It belongs to the GFP family. Contains a chromophore consisting of modified amino acid residues. The chromophore is formed by autocatalytic backbone condensation between Xaa-N and Gly-(N+2), oxidation of Tyr-(N+1) to didehydrotyrosine, and formation of a double bond to the alpha-amino nitrogen of residue Tyr-(N+1). Maturation of the chromophore requires nothing other than molecular oxygen. Tentacle tips.

In terms of biological role, pigment protein that is intensely purple in color. The protein is GFP-like non-fluorescent chromoprotein FP595 of Anemonia sulcata (Mediterranean snakelocks sea anemone).